A 189-amino-acid polypeptide reads, in one-letter code: dCTP deaminase (189 aa).

Residues 112–117, 136–138, Q157, Y171, and Q181 contribute to the dCTP site; these read KSTYAR and TLE. E138 serves as the catalytic Proton donor/acceptor.

This sequence belongs to the dCTP deaminase family. Homotrimer.

It carries out the reaction dCTP + H2O + H(+) = dUTP + NH4(+). Its pathway is pyrimidine metabolism; dUMP biosynthesis; dUMP from dCTP (dUTP route): step 1/2. Catalyzes the deamination of dCTP to dUTP. In Teredinibacter turnerae (strain ATCC 39867 / T7901), this protein is dCTP deaminase.